The chain runs to 146 residues: Lysozyme C (146 aa).

Residues 1 to 16 form the signal peptide; it reads SGKYISWEDSCSYLQL. In terms of domain architecture, C-type lysozyme spans 17-146; sequence QKYERCELAK…LSQWTQGCKL (130 aa). Cystine bridges form between Cys22–Cys144, Cys46–Cys132, Cys81–Cys97, and Cys93–Cys111. Catalysis depends on residues Glu51 and Asp69.

The protein belongs to the glycosyl hydrolase 22 family. In terms of tissue distribution, expressed by the skin glands.

It localises to the secreted. It catalyses the reaction Hydrolysis of (1-&gt;4)-beta-linkages between N-acetylmuramic acid and N-acetyl-D-glucosamine residues in a peptidoglycan and between N-acetyl-D-glucosamine residues in chitodextrins.. Its function is as follows. Lysozymes have primarily a bacteriolytic function; those in tissues and body fluids are associated with the monocyte-macrophage system and enhance the activity of immunoagents. Has antibacterial activity against the Gram-positive bacterium S.aureus and against the Gram-negative bacterium E.coli with a MIC of 1 uM and 8 uM respectively. No antifungal activity against C.albicans. This Bufo gargarizans andrewsi (Andrew's toad) protein is Lysozyme C.